Consider the following 1259-residue polypeptide: Trafficking protein particle complex II-specific subunit 130 homolog (1259 aa).

At Ala-2 the chain carries N-acetylalanine. The disordered stretch occupies residues 479–526 (GNIPEMFDGRPSFTEGSGLEASPRTPSSLKVQAPPMSRTNSSPGNFES).

The protein belongs to the TMEM1 family. In terms of assembly, part of the multisubunit TRAPP (transport protein particle) II complex composed of BET3, BET5, TRS20, TRS23, TRS31, TRS33, TRS65, TRS85, TRS120 and TRS130.

Its subcellular location is the golgi apparatus. The protein localises to the trans-Golgi network. The protein resides in the early endosome. Specific subunit of the TRAPP II complex, a highly conserved vesicle tethering complex that is required for the proper transport of proteins in post-Golgi trafficking pathways to the growing cell plate in mitotic active cells. Required for the polarized and selective transport of PIN2, but not PIN1, to the plasma membrane. Not required for ER-to-Golgi as well as biosynthetic and endocytic vacuolar transport. The protein is Trafficking protein particle complex II-specific subunit 130 homolog of Arabidopsis thaliana (Mouse-ear cress).